The following is a 244-amino-acid chain: Methanethiol S-methyltransferase (244 aa).

The next 5 helical transmembrane spans lie at 7-27, 41-61, 90-110, 120-140, and 181-201; these read IIYG…AIGF, IAAP…VFAV, LLAS…PAVI, VALW…TFMI, and GFVV…LFAI.

This sequence belongs to the nurim family.

The protein localises to the membrane. It carries out the reaction methanethiol + S-adenosyl-L-methionine = dimethyl sulfide + S-adenosyl-L-homocysteine + H(+). Its function is as follows. Catalyzes the methylation of methanethiol (MeSH) to yield dimethylsulphide (DMS). This chain is Methanethiol S-methyltransferase, found in Mycobacterium tuberculosis (strain ATCC 25618 / H37Rv).